Reading from the N-terminus, the 400-residue chain is Cytoplasmic tRNA 2-thiolation protein 2 (400 aa).

The protein belongs to the CTU2/NCS2 family.

It localises to the cytoplasm. It functions in the pathway tRNA modification; 5-methoxycarbonylmethyl-2-thiouridine-tRNA biosynthesis. Functionally, plays a central role in 2-thiolation of mcm(5)S(2)U at tRNA wobble positions of tRNA(Lys), tRNA(Glu) and tRNA(Gln). May act by forming a heterodimer with NCS6/CTU1 that ligates sulfur from thiocarboxylated URM1 onto the uridine of tRNAs at wobble position. This is Cytoplasmic tRNA 2-thiolation protein 2 from Drosophila virilis (Fruit fly).